A 266-amino-acid polypeptide reads, in one-letter code: MPKRETQSLHDTQQQPGPTAPQRDSLFAAPIAKLGDWTFDEKVAEVFPDMISRSVPGYSNIISMIGMLAERFVQPNSQIYDLGCSLGAATLSMRRNIKVEGCKIIAVDNSPAMIERCRRHIDAFRAETPVDVVESDILDIQLENASMVVLNFTLQFLEPADRQRLLNQVYQGLRPGGALVLSEKFNFEDNDVGELLFNMHHDFKRANGYSELEISQKRSMLENVMLTDSVETHKKRLHQAGFEHAEVWFQCFNFGSLIALKAGEAQ.

Residues 1–24 (MPKRETQSLHDTQQQPGPTAPQRD) are disordered. Residues Y58, 83-85 (GCS), 108-109 (DN), 136-137 (DI), N151, and R218 each bind S-adenosyl-L-methionine.

Belongs to the class I-like SAM-binding methyltransferase superfamily. Cx-SAM synthase family. As to quaternary structure, homodimer.

It catalyses the reaction prephenate + S-adenosyl-L-methionine = carboxy-S-adenosyl-L-methionine + 3-phenylpyruvate + H2O. Functionally, catalyzes the conversion of S-adenosyl-L-methionine (SAM) to carboxy-S-adenosyl-L-methionine (Cx-SAM). In Yersinia enterocolitica serotype O:8 / biotype 1B (strain NCTC 13174 / 8081), this protein is Carboxy-S-adenosyl-L-methionine synthase.